The following is a 135-amino-acid chain: Small ribosomal subunit protein bS6 (135 aa).

The segment at 104-135 (FSRLDRNGHIGHDEKHPRSPSRQREDVIEGVE) is disordered.

The protein belongs to the bacterial ribosomal protein bS6 family.

Binds together with bS18 to 16S ribosomal RNA. The protein is Small ribosomal subunit protein bS6 of Bartonella henselae (strain ATCC 49882 / DSM 28221 / CCUG 30454 / Houston 1) (Rochalimaea henselae).